The primary structure comprises 351 residues: Heme A synthase (351 aa).

8 helical membrane passes run 17 to 37 (WLIL…ATRL), 103 to 123 (LIGL…WLGQ), 129 to 149 (LVGL…MVSS), 164 to 184 (LMTH…LWLD), 201 to 221 (AMAL…VAGL), 261 to 281 (FNHR…AWAF), 289 to 309 (EFAF…LTLV), and 316 to 336 (LALV…YTVW). Histidine 263 lines the heme pocket. Histidine 320 is a heme binding site.

This sequence belongs to the COX15/CtaA family. Type 2 subfamily. In terms of assembly, interacts with CtaB. Heme b serves as cofactor.

It localises to the cell membrane. It catalyses the reaction Fe(II)-heme o + 2 A + H2O = Fe(II)-heme a + 2 AH2. It functions in the pathway porphyrin-containing compound metabolism; heme A biosynthesis; heme A from heme O: step 1/1. Functionally, catalyzes the conversion of heme O to heme A by two successive hydroxylations of the methyl group at C8. The first hydroxylation forms heme I, the second hydroxylation results in an unstable dihydroxymethyl group, which spontaneously dehydrates, resulting in the formyl group of heme A. The chain is Heme A synthase from Hyphomonas neptunium (strain ATCC 15444).